We begin with the raw amino-acid sequence, 326 residues long: D-amino-acid oxidase (326 aa).

FAD is bound by residues G18, V19, T46, T47, S48, A52, A53, V162, and S179. 2 residues coordinate D-proline: Y222 and R277. D-serine-binding residues include Y222 and R277. R277, G303, G304, G306, and T308 together coordinate FAD. G304 is a D-proline binding site. G304 contributes to the D-serine binding site.

It belongs to the DAMOX/DASOX family. As to quaternary structure, monomer. The cofactor is FAD.

The protein resides in the cytoplasm. Its subcellular location is the secreted. It localises to the cell wall. The enzyme catalyses a D-alpha-amino acid + O2 + H2O = a 2-oxocarboxylate + H2O2 + NH4(+). The catalysed reaction is D-valine + O2 + H2O = 3-methyl-2-oxobutanoate + H2O2 + NH4(+). It carries out the reaction D-leucine + O2 + H2O = 4-methyl-2-oxopentanoate + H2O2 + NH4(+). It catalyses the reaction D-isoleucine + O2 + H2O = (R)-3-methyl-2-oxopentanoate + H2O2 + NH4(+). The enzyme catalyses D-tyrosine + O2 + H2O = 3-(4-hydroxyphenyl)pyruvate + H2O2 + NH4(+). The catalysed reaction is D-threonine + O2 + H2O = (S)-3-hydroxy-2-oxobutanoate + H2O2 + NH4(+). With respect to regulation, inhibited by benzoate and phenylmethylsulfonyl fluoride (PMSF). Weakly inhibited by anthranilate, crotonate, and the amino acid-modifying agents dithionitrobenzoic acid and diethyl pyrocarbonate. Not inhibited by malonate, meso-tartrate, D-malate, or the amino acid-modifying agents iodoacetic acid or butane-2,3-dione. In terms of biological role, catalyzes the oxidative deamination of D-amino acids with broad substrate specificity. This chain is D-amino-acid oxidase, found in Rubrobacter xylanophilus (strain DSM 9941 / JCM 11954 / NBRC 16129 / PRD-1).